The chain runs to 861 residues: Benzylsuccinate synthase alpha subunit (861 aa).

The 673-residue stretch at 40 to 712 folds into the PFL domain; the sequence is TERTRRLKAR…QAVGLYMEVG (673 aa). Positions 718-744 are disordered; it reads TPDGRFGGEAADDGGISPYSGTDKKGP. Residues 731–850 form the Glycine radical domain; it reads GGISPYSGTD…IIARNEQNFN (120 aa). Position 825 is a glycine radical (G825).

The protein belongs to the glycyl radical enzyme (GRE) family. BSS subfamily. Heterohexamer composed of 2 alpha subunits, 2 beta subunits and 2 gamma subunits.

The enzyme catalyses toluene + fumarate = 2-benzylsuccinate. Its pathway is xenobiotic degradation; toluene degradation. With respect to regulation, activated by the benzylsuccinate synthase activating enzyme BssD. Rapidly inactivated by oxygen. Its function is as follows. Catalyzes the addition of fumarate to the methyl group of toluene, leading to the formation of benzylsuccinate. The polypeptide is Benzylsuccinate synthase alpha subunit (bssA) (Thauera aromatica).